A 369-amino-acid chain; its full sequence is MKYKRIVFKVGTSSITHSDGSLSRGKIQTITCQLAALHHAGHELVLVSSGAVAAGFGALGFKKRPVKIADKQASAAVGQGLLMEEYTANLSSDGIVSAQILLSRADFADKRRYQNAGGALSVLLQRRAVPIINENDTVSVEELKIGDNDTLSAQVAAMIQADLLVLLTDIDGLYTGNPNSNPDAVRLDKIEHINHEIIEMAGGSGSANGTGGMLTKIKAATIAAESGVPVYICSSLKPDALAEAAEHQADGSFFVPRAKGLRTQKQWLAFYSESRGSVYVDEGAEHALSEQGKSLLMSGIAGIEGHFSRMDTVTVYSKATKQPLGKGRVLFGSAAAEDLLKSRKAKGVFIHRDDWISITPEIRLLLTEF.

Residue Lys-9 participates in ATP binding. Substrate-binding residues include Ser-49, Asp-136, and Asn-148. Residues 168 to 169 (TD) and 210 to 216 (TGGMLTK) contribute to the ATP site. A PUA domain is found at 275-355 (RGSVYVDEGA…KGVFIHRDDW (81 aa)).

The protein belongs to the glutamate 5-kinase family.

It is found in the cytoplasm. The catalysed reaction is L-glutamate + ATP = L-glutamyl 5-phosphate + ADP. It participates in amino-acid biosynthesis; L-proline biosynthesis; L-glutamate 5-semialdehyde from L-glutamate: step 1/2. In terms of biological role, catalyzes the transfer of a phosphate group to glutamate to form L-glutamate 5-phosphate. This is Glutamate 5-kinase from Neisseria meningitidis serogroup B (strain ATCC BAA-335 / MC58).